Consider the following 238-residue polypeptide: ATP-dependent dethiobiotin synthetase BioD (238 aa).

Residue 13–18 participates in ATP binding; it reads DIGKTF. Threonine 17 lines the Mg(2+) pocket. Lysine 38 is a catalytic residue. Substrate is bound at residue serine 42. Residues aspartate 55, 116 to 119, 209 to 211, and asparagine 216 contribute to the ATP site; these read EGSG and PRI. Mg(2+) contacts are provided by aspartate 55 and glutamate 116.

This sequence belongs to the dethiobiotin synthetase family. Homodimer. The cofactor is Mg(2+).

Its subcellular location is the cytoplasm. It catalyses the reaction (7R,8S)-7,8-diammoniononanoate + CO2 + ATP = (4R,5S)-dethiobiotin + ADP + phosphate + 3 H(+). It functions in the pathway cofactor biosynthesis; biotin biosynthesis; biotin from 7,8-diaminononanoate: step 1/2. Its function is as follows. Catalyzes a mechanistically unusual reaction, the ATP-dependent insertion of CO2 between the N7 and N8 nitrogen atoms of 7,8-diaminopelargonic acid (DAPA, also called 7,8-diammoniononanoate) to form a ureido ring. In Clostridium novyi (strain NT), this protein is ATP-dependent dethiobiotin synthetase BioD.